Here is a 48-residue protein sequence, read N- to C-terminus: Delta-ctenitoxin-Pn1b (48 aa).

Cystine bridges form between Cys1–Cys15, Cys8–Cys21, Cys12–Cys48, Cys14–Cys31, and Cys23–Cys29.

The protein belongs to the neurotoxin 03 (Tx2) family. 05 subfamily. Expressed by the venom gland.

Its subcellular location is the secreted. Its function is as follows. Insecticidal neurotoxin that reversibly inhibits the N-methyl-D-aspartate (NMDA)-subtype of ionotropic glutamate receptor (GRIN) and inhibits inactivation of insect sodium channels (Nav). Inhibits glutamate uptake in rat brain synaptosomes. In vivo, induces immediate excitatory effects when injected intrathoracically in houseflies and cockroaches. The sequence is that of Delta-ctenitoxin-Pn1b from Phoneutria nigriventer (Brazilian armed spider).